The following is a 437-amino-acid chain: Pterin deaminase (437 aa).

Histidine 80 and histidine 82 together coordinate a divalent metal cation. A substrate-binding site is contributed by lysine 85. Residue histidine 231 participates in a divalent metal cation binding. Residue glutamate 234 is the Proton donor of the active site. Aspartate 331 contacts a divalent metal cation. Position 331-332 (331-332) interacts with substrate; sequence DN.

The protein belongs to the metallo-dependent hydrolases superfamily. Pterin deaminase family. Requires a divalent metal cation as cofactor.

It carries out the reaction a 2-amino-4-hydroxypteridine + H2O + H(+) = a 2,4-dihydroxypteridine + NH4(+). It catalyses the reaction L-sepiapterin + H2O + H(+) = (S)-xanthopterin-B2 + NH4(+). Its function is as follows. Catalyzes the deamination of many pterin metabolites, such as formylpterin, pterin-6-carboxylate, pterin-7-carboxylate, pterin, hydroxymethylpterin, biopterin, D-(+)-neopterin, isoxanthopterin, sepiapterin, folate, xanthopterin, and 7,8-dihydrohydroxymethylpterin. May be involved in a degradative pathway for catabolizing pterin rings. The chain is Pterin deaminase from Rhizobium rhizogenes (strain K84 / ATCC BAA-868) (Agrobacterium radiobacter).